Reading from the N-terminus, the 319-residue chain is ATP-dependent 6-phosphofructokinase (319 aa).

Gly-11 is a binding site for ATP. 21-25 (RAVVR) contacts ADP. Residues 72–73 (RY) and 102–105 (GDGS) each bind ATP. Asp-103 contributes to the Mg(2+) binding site. A substrate-binding site is contributed by 125-127 (TID). The active-site Proton acceptor is Asp-127. Arg-154 is a binding site for ADP. Substrate is bound by residues Arg-162 and 169 to 171 (MGR). Residues 185–187 (GAE), Arg-211, and 213–215 (KKH) each bind ADP. Substrate-binding positions include Glu-222, Arg-243, and 249-252 (HVQR).

The protein belongs to the phosphofructokinase type A (PFKA) family. ATP-dependent PFK group I subfamily. Prokaryotic clade 'B1' sub-subfamily. As to quaternary structure, homotetramer. Mg(2+) serves as cofactor.

The protein localises to the cytoplasm. It carries out the reaction beta-D-fructose 6-phosphate + ATP = beta-D-fructose 1,6-bisphosphate + ADP + H(+). The protein operates within carbohydrate degradation; glycolysis; D-glyceraldehyde 3-phosphate and glycerone phosphate from D-glucose: step 3/4. Allosterically activated by ADP and other diphosphonucleosides, and allosterically inhibited by phosphoenolpyruvate. Functionally, catalyzes the phosphorylation of D-fructose 6-phosphate to fructose 1,6-bisphosphate by ATP, the first committing step of glycolysis. The protein is ATP-dependent 6-phosphofructokinase of Listeria monocytogenes serotype 4b (strain CLIP80459).